The following is a 365-amino-acid chain: Aminomethyltransferase (365 aa).

The protein belongs to the GcvT family. In terms of assembly, the glycine cleavage system is composed of four proteins: P, T, L and H.

The enzyme catalyses N(6)-[(R)-S(8)-aminomethyldihydrolipoyl]-L-lysyl-[protein] + (6S)-5,6,7,8-tetrahydrofolate = N(6)-[(R)-dihydrolipoyl]-L-lysyl-[protein] + (6R)-5,10-methylene-5,6,7,8-tetrahydrofolate + NH4(+). The glycine cleavage system catalyzes the degradation of glycine. The chain is Aminomethyltransferase from Yersinia pestis bv. Antiqua (strain Antiqua).